A 263-amino-acid polypeptide reads, in one-letter code: Ribosome maturation factor RimP (263 aa).

Positions 192-263 (EREMKRDLGI…RGEIDPIEGE (72 aa)) are disordered. Over residues 217–231 (PARRNAPKPKLKSTA) the composition is skewed to basic residues. Residues 232-257 (KAHEKKPPKNTKEHRLAAERLRRGEI) are compositionally biased toward basic and acidic residues.

Belongs to the RimP family.

The protein localises to the cytoplasm. Required for maturation of 30S ribosomal subunits. This Nitrobacter hamburgensis (strain DSM 10229 / NCIMB 13809 / X14) protein is Ribosome maturation factor RimP.